The primary structure comprises 234 residues: Sugar fermentation stimulation protein A (234 aa).

Positions 201–220 form a DNA-binding region, H-T-H motif; the sequence is LLSEAQQRGVEILAYKAEIS.

It belongs to the SfsA family.

Its function is as follows. Binds to DNA non-specifically. Could be a regulatory factor involved in maltose metabolism. The protein is Sugar fermentation stimulation protein A of Shigella flexneri serotype 5b (strain 8401).